Consider the following 375-residue polypeptide: Succinyl-diaminopimelate desuccinylase (375 aa).

His-66 contacts Zn(2+). The active site involves Asp-68. Asp-99 is a Zn(2+) binding site. Glu-133 serves as the catalytic Proton acceptor. The Zn(2+) site is built by Glu-134, Glu-162, and His-348.

It belongs to the peptidase M20A family. DapE subfamily. In terms of assembly, homodimer. The cofactor is Zn(2+). It depends on Co(2+) as a cofactor.

The enzyme catalyses N-succinyl-(2S,6S)-2,6-diaminopimelate + H2O = (2S,6S)-2,6-diaminopimelate + succinate. It functions in the pathway amino-acid biosynthesis; L-lysine biosynthesis via DAP pathway; LL-2,6-diaminopimelate from (S)-tetrahydrodipicolinate (succinylase route): step 3/3. Functionally, catalyzes the hydrolysis of N-succinyl-L,L-diaminopimelic acid (SDAP), forming succinate and LL-2,6-diaminopimelate (DAP), an intermediate involved in the bacterial biosynthesis of lysine and meso-diaminopimelic acid, an essential component of bacterial cell walls. The sequence is that of Succinyl-diaminopimelate desuccinylase from Enterobacter sp. (strain 638).